The chain runs to 925 residues: Translation initiation factor IF-2 (925 aa).

The segment at 190-329 is disordered; that stretch reads PAAPTSEAAP…RRRDEREAAV (140 aa). Pro residues-rich tracts occupy residues 199–209, 217–238, and 279–288; these read PPEPEPTPLPA, PVRP…PAPR, and RPVPAQPAPQ. The span at 289–307 shows a compositional bias: low complexity; the sequence is TPTRSGSGIAKKGAITKAG. Residues 320–329 are compositionally biased toward basic and acidic residues; that stretch reads RRRDEREAAV. The region spanning 417 to 589 is the tr-type G domain; it reads VRPPVVTIMG…LLLVADYELE (173 aa). Residues 426-433 form a G1 region; the sequence is GHVDHGKT. A GTP-binding site is contributed by 426–433; the sequence is GHVDHGKT. Positions 451-455 are G2; sequence GITQH. Positions 476-479 are G3; that stretch reads DTPG. GTP contacts are provided by residues 476–480 and 530–533; these read DTPGH and NKVD. A G4 region spans residues 530-533; that stretch reads NKVD. Positions 566 to 568 are G5; that stretch reads SAK.

This sequence belongs to the TRAFAC class translation factor GTPase superfamily. Classic translation factor GTPase family. IF-2 subfamily.

The protein resides in the cytoplasm. Functionally, one of the essential components for the initiation of protein synthesis. Protects formylmethionyl-tRNA from spontaneous hydrolysis and promotes its binding to the 30S ribosomal subunits. Also involved in the hydrolysis of GTP during the formation of the 70S ribosomal complex. The sequence is that of Translation initiation factor IF-2 from Gloeobacter violaceus (strain ATCC 29082 / PCC 7421).